We begin with the raw amino-acid sequence, 415 residues long: MKGSYKSRWVIVIVVVIAAIAAFWFWQGRNDSRSAAPGATKQAQQSPASGRRGMRSGPLAPVQAATAVEQAVPRYLTGLGTITAANTVTVRSRVDGQLMALHFQEGQQVKAGDLLAEIDPSQFKVALAQAQGQLAKDKATLANARRDLARYQQLAKTNLVSRQELDAQQALVSETEGTIKADEASVASAQLQLDWSRITAPVDGRVGLKQVDVGNQISSGDTTGIVVITQTHPIDLVFTLPESDIATVVQAQKAGKPLVVEAWDRTNSKKLSEGTLLSLDNQIDATTGTIKVKARFNNQDDALFPNQFVNARMLVDTEQNAVVIPTAALQMGNEGHFVWVLNSENKVSKHLVTPGIQDSQKVVIRAGISAGDRVVTDGIDRLTEGAKVEVVEAQSATTPEEKATSREYAKKGARS.

Residues 1-21 (MKGSYKSRWVIVIVVVIAAIA) form the signal peptide. Disordered stretches follow at residues 32 to 60 (SRSAAPGATKQAQQSPASGRRGMRSGPLA) and 392 to 415 (EAQSATTPEEKATSREYAKKGARS). The segment covering 399–415 (PEEKATSREYAKKGARS) has biased composition (basic and acidic residues).

It belongs to the membrane fusion protein (MFP) (TC 8.A.1) family. In terms of assembly, part of a tripartite efflux system composed of MdtA, MdtB and MdtC.

The protein resides in the cell inner membrane. The MdtABC tripartite complex confers resistance against novobiocin and deoxycholate. The protein is Multidrug resistance protein MdtA of Escherichia coli O81 (strain ED1a).